A 22-amino-acid chain; its full sequence is uncharacterized protein (22 aa).

The disordered stretch occupies residues 1–22 (MHNSIAYDKDGNSTGQKYYAYG).

This is an uncharacterized protein from Lactobacillus helveticus (Lactobacillus suntoryeus).